Here is a 363-residue protein sequence, read N- to C-terminus: 3-isopropylmalate dehydrogenase (363 aa).

78-91 (GKKWDDLPINQRPE) is a binding site for NAD(+). Positions 99, 109, 138, and 227 each coordinate substrate. The Mg(2+) site is built by Asp227, Asp251, and Asp255. 285–297 (GSAPDIEGKNIAN) is an NAD(+) binding site.

This sequence belongs to the isocitrate and isopropylmalate dehydrogenases family. LeuB type 1 subfamily. In terms of assembly, homodimer. The cofactor is Mg(2+). Mn(2+) serves as cofactor.

It is found in the cytoplasm. The enzyme catalyses (2R,3S)-3-isopropylmalate + NAD(+) = 4-methyl-2-oxopentanoate + CO2 + NADH. Its pathway is amino-acid biosynthesis; L-leucine biosynthesis; L-leucine from 3-methyl-2-oxobutanoate: step 3/4. In terms of biological role, catalyzes the oxidation of 3-carboxy-2-hydroxy-4-methylpentanoate (3-isopropylmalate) to 3-carboxy-4-methyl-2-oxopentanoate. The product decarboxylates to 4-methyl-2 oxopentanoate. The polypeptide is 3-isopropylmalate dehydrogenase (Buchnera aphidicola subsp. Uroleucon rudbeckiae).